A 125-amino-acid polypeptide reads, in one-letter code: Small ribosomal subunit protein uS12 (125 aa).

Residues arginine 9–arginine 31 are disordered. Position 89 is a 3-methylthioaspartic acid (aspartate 89). The tract at residues glycine 106–alanine 125 is disordered. Positions serine 113–alanine 125 are enriched in basic residues.

This sequence belongs to the universal ribosomal protein uS12 family. In terms of assembly, part of the 30S ribosomal subunit. Contacts proteins S8 and S17. May interact with IF1 in the 30S initiation complex.

With S4 and S5 plays an important role in translational accuracy. In terms of biological role, interacts with and stabilizes bases of the 16S rRNA that are involved in tRNA selection in the A site and with the mRNA backbone. Located at the interface of the 30S and 50S subunits, it traverses the body of the 30S subunit contacting proteins on the other side and probably holding the rRNA structure together. The combined cluster of proteins S8, S12 and S17 appears to hold together the shoulder and platform of the 30S subunit. This chain is Small ribosomal subunit protein uS12, found in Polaromonas sp. (strain JS666 / ATCC BAA-500).